Here is a 153-residue protein sequence, read N- to C-terminus: Actin-related protein 2/3 complex subunit 5-like protein (153 aa).

A Phosphoserine modification is found at serine 64.

It belongs to the ARPC5 family. In terms of assembly, may be a component of the Arp2/3 complex in which it may replace ARPC5.

It is found in the cytoplasm. It localises to the cytoskeleton. In terms of biological role, may function as component of the Arp2/3 complex which is involved in regulation of actin polymerization and together with an activating nucleation-promoting factor (NPF) mediates the formation of branched actin networks. This is Actin-related protein 2/3 complex subunit 5-like protein (ARPC5L) from Pongo abelii (Sumatran orangutan).